The primary structure comprises 77 residues: MSLFDFFKNKGSAATATDRLKLILAKERTLNLPYMEEMRKEIIAVIQKYTKSSDIHFKTLDSNQSVETIEVEIILPK.

This sequence belongs to the MinE family.

In terms of biological role, prevents the cell division inhibition by proteins MinC and MinD at internal division sites while permitting inhibition at polar sites. This ensures cell division at the proper site by restricting the formation of a division septum at the midpoint of the long axis of the cell. The sequence is that of Cell division topological specificity factor from Helicobacter pylori (strain P12).